Here is a 709-residue protein sequence, read N- to C-terminus: ATP-binding cassette sub-family F member 3 (709 aa).

The residue at position 2 (Ala2) is an N-acetylalanine. Ser83 carries the post-translational modification Phosphoserine. A compositionally biased stretch (basic and acidic residues) spans 129–143 (RLKAKQEKRSEKDTL). The interval 129–171 (RLKAKQEKRSEKDTLKTSNPLVLEEASASQAGSRKESRLESSG) is disordered. A phosphoserine mark is found at Ser155, Ser157, and Ser161. Positions 161–171 (SRKESRLESSG) are enriched in basic and acidic residues. ABC transporter domains lie at 178–424 (VRIE…LNQQ) and 492–707 (LQLD…RREG). Residue 210–217 (GRNGLGKT) participates in ATP binding. Phosphoserine is present on Ser283. 525–532 (GENGAGKS) is an ATP binding site.

It belongs to the ABC transporter superfamily. ABCF family. EF3 subfamily.

Displays an antiviral effect against flaviviruses in the presence of OAS1B. The sequence is that of ATP-binding cassette sub-family F member 3 (ABCF3) from Pongo abelii (Sumatran orangutan).